Consider the following 145-residue polypeptide: ATP synthase epsilon chain (145 aa).

This sequence belongs to the ATPase epsilon chain family. As to quaternary structure, F-type ATPases have 2 components, CF(1) - the catalytic core - and CF(0) - the membrane proton channel. CF(1) has five subunits: alpha(3), beta(3), gamma(1), delta(1), epsilon(1). CF(0) has three main subunits: a, b and c.

Its subcellular location is the cell inner membrane. Functionally, produces ATP from ADP in the presence of a proton gradient across the membrane. The polypeptide is ATP synthase epsilon chain (Francisella tularensis subsp. tularensis (strain FSC 198)).